The chain runs to 196 residues: tRNA(Phe) 7-((3-amino-3-carboxypropyl)-4-demethylwyosine(37)-N(4))-methyltransferase 1 (196 aa).

This sequence belongs to the TYW3 family.

The enzyme catalyses 4-demethyl-7-[(3S)-3-amino-3-carboxypropyl]wyosine(37) in tRNA(Phe) + S-adenosyl-L-methionine = 7-[(3S)-3-amino-3-carboxypropyl]wyosine(37) in tRNA(Phe) + S-adenosyl-L-homocysteine + H(+). Functionally, S-adenosyl-L-methionine-dependent methyltransferase that acts as a component of the wyosine derivatives biosynthesis pathway. Probably methylates N-4 position of wybutosine-86 to produce wybutosine-72. The protein is tRNA(Phe) 7-((3-amino-3-carboxypropyl)-4-demethylwyosine(37)-N(4))-methyltransferase 1 of Pyrococcus furiosus (strain ATCC 43587 / DSM 3638 / JCM 8422 / Vc1).